A 503-amino-acid polypeptide reads, in one-letter code: Cobyric acid synthase (503 aa).

One can recognise a GATase cobBQ-type domain in the interval 251 to 450; sequence DLDIAVIRLP…IHGIFENAAF (200 aa). C331 (nucleophile) is an active-site residue. H442 is a catalytic residue.

Belongs to the CobB/CobQ family. CobQ subfamily.

It participates in cofactor biosynthesis; adenosylcobalamin biosynthesis. Catalyzes amidations at positions B, D, E, and G on adenosylcobyrinic A,C-diamide. NH(2) groups are provided by glutamine, and one molecule of ATP is hydrogenolyzed for each amidation. The chain is Cobyric acid synthase from Dehalococcoides mccartyi (strain ATCC BAA-2100 / JCM 16839 / KCTC 5957 / BAV1).